A 488-amino-acid chain; its full sequence is Probable cytochrome P450 6u1 (488 aa).

Residue Cys430 coordinates heme.

It belongs to the cytochrome P450 family. Heme serves as cofactor.

It localises to the endoplasmic reticulum membrane. It is found in the microsome membrane. May be involved in the metabolism of insect hormones and in the breakdown of synthetic insecticides. This is Probable cytochrome P450 6u1 (Cyp6u1) from Drosophila melanogaster (Fruit fly).